The following is a 526-amino-acid chain: Adenylyl cyclase-associated protein (526 aa).

The tract at residues 1-168 (MPDSKYTMQG…RQSKYFAYLS (168 aa)) is adenyl cyclase-binding. Disordered stretches follow at residues 43–72 (EASK…PEVE), 255–304 (QSTK…DANK), and 326–371 (KVDK…RPPR). Residues 45 to 64 (SKNNKPSDSGADANTTNEPS) show a composition bias toward polar residues. Positions 169–369 (ALSEGAPLFS…KPSTLKTKRP (201 aa)) match the SH3-binding motif. A compositionally biased stretch (low complexity) spans 262 to 274 (ATSSPSPASATAA). Over residues 275-285 (PAPPPPPPAPP) the composition is skewed to pro residues. A compositionally biased stretch (polar residues) spans 290-302 (EISNDTPATSSDA). Positions 326–338 (KVDKSQQTHKNPE) are enriched in basic and acidic residues. Residues 342-352 (SSTVSSTGSKS) show a composition bias toward low complexity. An interaction with SH3 domain of ABP1 region spans residues 354–361 (PPPRPKKP). Positions 357 to 370 (RPKKPSTLKTKRPP) are enriched in basic residues. A C-CAP/cofactor C-like domain is found at 369–504 (PPRKELVGNK…EDDDYVEFPI (136 aa)). The dimerization and actin-binding stretch occupies residues 370–526 (PRKELVGNKW…FKSAVFEHAG (157 aa)). Ser-454 carries the phosphoserine modification.

The protein belongs to the CAP family. As to quaternary structure, homodimer.

It is found in the cytoplasm. It localises to the cytoskeleton. The protein resides in the actin patch. In terms of biological role, the N-terminal domain binds to adenylyl cyclase, thereby enabling adenylyl cyclase to be activated by upstream regulatory signals, such as Ras. The C-terminal domain is required for normal cellular morphology and growth control. This Saccharomyces cerevisiae (strain ATCC 204508 / S288c) (Baker's yeast) protein is Adenylyl cyclase-associated protein (SRV2).